The primary structure comprises 204 residues: High frequency lysogenization protein HflD homolog (204 aa).

This sequence belongs to the HflD family.

It localises to the cytoplasm. The protein resides in the cell inner membrane. This chain is High frequency lysogenization protein HflD homolog, found in Aeromonas hydrophila subsp. hydrophila (strain ATCC 7966 / DSM 30187 / BCRC 13018 / CCUG 14551 / JCM 1027 / KCTC 2358 / NCIMB 9240 / NCTC 8049).